Consider the following 260-residue polypeptide: 5'-nucleotidase SurE (260 aa).

4 residues coordinate a divalent metal cation: Asp-19, Asp-20, Ser-51, and Asn-104.

The protein belongs to the SurE nucleotidase family. A divalent metal cation is required as a cofactor.

The protein localises to the cytoplasm. It catalyses the reaction a ribonucleoside 5'-phosphate + H2O = a ribonucleoside + phosphate. Functionally, nucleotidase that shows phosphatase activity on nucleoside 5'-monophosphates. This Paramagnetospirillum magneticum (strain ATCC 700264 / AMB-1) (Magnetospirillum magneticum) protein is 5'-nucleotidase SurE.